The following is a 278-amino-acid chain: Sulfur carrier protein FdhD (278 aa).

C121 serves as the catalytic Cysteine persulfide intermediate. Residue 260–265 (FCKPGR) participates in Mo-bis(molybdopterin guanine dinucleotide) binding.

Belongs to the FdhD family.

The protein resides in the cytoplasm. Its function is as follows. Required for formate dehydrogenase (FDH) activity. Acts as a sulfur carrier protein that transfers sulfur from IscS to the molybdenum cofactor prior to its insertion into FDH. In Salmonella typhi, this protein is Sulfur carrier protein FdhD.